Reading from the N-terminus, the 698-residue chain is ATP-dependent RNA helicase DHX33 (698 aa).

2 disordered regions span residues 1–20 (MPEE…SCPP) and 29–50 (TAGG…AQPS). The interval 1–71 (MPEEASLPPA…RRSLPIFRAR (71 aa)) is required for nucleolar location. Positions 30 to 40 (AGGGGGAGGGR) are enriched in gly residues. The region spanning 75–243 (LAQLRNLDNA…FNRAPVLYLE (169 aa)) is the Helicase ATP-binding domain. ATP is bound at residue 88 to 95 (GETGSGKT). Positions 185–188 (DEAH) match the DEAH box motif. The Helicase C-terminal domain maps to 271–441 (QIHQEAPASQ…SVILQLLAMK (171 aa)). The interval 462–553 (AIAQLDLLGA…ISSEGDHITL (92 aa)) is HA2; required for interaction with EIF3G and RPL26. The Critical for rDNA-binding motif lies at 536–550 (VQSVRKKFISSEGDH).

It belongs to the DEAD box helicase family. DEAH subfamily. As to quaternary structure, interacts with UBTF. Interacts with DDX3X, EIF3G and EIF3H; the interaction is independent of RNA. Interacts (via HA2 region and Helicase C-terminal domain) with the components of the large ribosomal subunit RPL3, RPL7, RPL26 and RPL27. Binds to mRNA. Interacts (via the helicase C-terminal domain) with MAVS. Binds to double-stranded RNA (via the helicase C-terminal domain). In terms of processing, ubiquitinated, leading to its degradation by the proteasome. Deubiquitinated by USP36.

It localises to the nucleus. Its subcellular location is the nucleolus. The protein resides in the nucleoplasm. It is found in the cytoplasm. The protein localises to the inflammasome. It carries out the reaction ATP + H2O = ADP + phosphate + H(+). Functionally, implicated in nucleolar organization, ribosome biogenesis, protein synthesis and cytoplasmic dsRNA sensing. Stimulates RNA polymerase I transcription of the 47S precursor rRNA. Associates with ribosomal DNA (rDNA) loci where it is involved in POLR1A recruitment. In the cytoplasm, promotes elongation-competent 80S ribosome assembly at the late stage of mRNA translation initiation. Senses cytosolic dsRNA mediating NLRP3 inflammasome formation in macrophages and type I interferon production in myeloid dendritic cells. Required for NLRP3 activation induced by viral dsRNA and bacterial RNA. In dendritic cells, required for induction of type I interferon production induced by cytoplasmic dsRNA via the activation of MAPK and NF-kappa-B signaling pathways. This is ATP-dependent RNA helicase DHX33 from Mus musculus (Mouse).